We begin with the raw amino-acid sequence, 500 residues long: Histidine--tRNA ligase (500 aa).

This sequence belongs to the class-II aminoacyl-tRNA synthetase family. As to quaternary structure, homodimer.

The protein resides in the cytoplasm. The catalysed reaction is tRNA(His) + L-histidine + ATP = L-histidyl-tRNA(His) + AMP + diphosphate + H(+). This Mesorhizobium japonicum (strain LMG 29417 / CECT 9101 / MAFF 303099) (Mesorhizobium loti (strain MAFF 303099)) protein is Histidine--tRNA ligase (hisS).